The following is a 175-amino-acid chain: Crossover junction endodeoxyribonuclease RuvC (175 aa).

Active-site residues include D16, E76, and D148. D16, E76, and D148 together coordinate Mg(2+).

This sequence belongs to the RuvC family. As to quaternary structure, homodimer which binds Holliday junction (HJ) DNA. The HJ becomes 2-fold symmetrical on binding to RuvC with unstacked arms; it has a different conformation from HJ DNA in complex with RuvA. In the full resolvosome a probable DNA-RuvA(4)-RuvB(12)-RuvC(2) complex forms which resolves the HJ. Requires Mg(2+) as cofactor.

The protein localises to the cytoplasm. It catalyses the reaction Endonucleolytic cleavage at a junction such as a reciprocal single-stranded crossover between two homologous DNA duplexes (Holliday junction).. In terms of biological role, the RuvA-RuvB-RuvC complex processes Holliday junction (HJ) DNA during genetic recombination and DNA repair. Endonuclease that resolves HJ intermediates. Cleaves cruciform DNA by making single-stranded nicks across the HJ at symmetrical positions within the homologous arms, yielding a 5'-phosphate and a 3'-hydroxyl group; requires a central core of homology in the junction. The consensus cleavage sequence is 5'-(A/T)TT(C/G)-3'. Cleavage occurs on the 3'-side of the TT dinucleotide at the point of strand exchange. HJ branch migration catalyzed by RuvA-RuvB allows RuvC to scan DNA until it finds its consensus sequence, where it cleaves and resolves the cruciform DNA. The chain is Crossover junction endodeoxyribonuclease RuvC from Bradyrhizobium diazoefficiens (strain JCM 10833 / BCRC 13528 / IAM 13628 / NBRC 14792 / USDA 110).